The following is a 319-amino-acid chain: HPr kinase/phosphorylase (319 aa).

Residues histidine 146 and lysine 167 contribute to the active site. 161 to 168 (GESGLGKS) contacts ATP. Serine 168 provides a ligand contact to Mg(2+). The active-site Proton acceptor; for phosphorylation activity. Proton donor; for dephosphorylation activity is aspartate 185. The segment at 209–218 (LEVRGIGLLD) is important for the catalytic mechanism of both phosphorylation and dephosphorylation. Residue glutamate 210 coordinates Mg(2+). Residue arginine 252 is part of the active site. The interval 273 to 278 (QVVAGR) is important for the catalytic mechanism of dephosphorylation.

It belongs to the HPrK/P family. As to quaternary structure, homohexamer. Mg(2+) is required as a cofactor.

The enzyme catalyses [HPr protein]-L-serine + ATP = [HPr protein]-O-phospho-L-serine + ADP + H(+). It carries out the reaction [HPr protein]-O-phospho-L-serine + phosphate + H(+) = [HPr protein]-L-serine + diphosphate. In terms of biological role, catalyzes the ATP- as well as the pyrophosphate-dependent phosphorylation of a specific serine residue in HPr, a phosphocarrier protein of the phosphoenolpyruvate-dependent sugar phosphotransferase system (PTS). HprK/P also catalyzes the pyrophosphate-producing, inorganic phosphate-dependent dephosphorylation (phosphorolysis) of seryl-phosphorylated HPr (P-Ser-HPr). This is HPr kinase/phosphorylase from Variovorax paradoxus (strain S110).